The sequence spans 69 residues: Small ribosomal subunit protein bS21 (69 aa).

Residues 50–69 (KAFKRKQAKKVRKLKQKTNR) are disordered.

It belongs to the bacterial ribosomal protein bS21 family.

The sequence is that of Small ribosomal subunit protein bS21 from Borrelia garinii subsp. bavariensis (strain ATCC BAA-2496 / DSM 23469 / PBi) (Borreliella bavariensis).